Reading from the N-terminus, the 282-residue chain is Snake venom serine protease BmSP (282 aa).

Positions 1–18 are cleaved as a signal peptide; it reads MVLIGVLASLLILQLSYS. Residues 19-56 constitute a propeptide that is removed on maturation; sequence KSLDDGAKESAYDDEIQQSSWGNSTVNTTLTETVVIQL. Residues Asn41 and Asn45 are each glycosylated (N-linked (GlcNAc...) asparagine). The Peptidase S1 domain occupies 57 to 280; it reads IMGGSECYKS…YIDWIKGIIA (224 aa). 5 disulfide bridges follow: Cys63–Cys195, Cys82–Cys98, Cys174–Cys241, Cys206–Cys220, and Cys231–Cys256. Catalysis depends on His97, which acts as the Charge relay system. N-linked (GlcNAc...) asparagine glycosylation occurs at Asn135. Asp142 serves as the catalytic Charge relay system. N-linked (GlcNAc...) asparagine glycans are attached at residues Asn149 and Asn153. The active-site Charge relay system is Ser235.

It belongs to the peptidase S1 family. Snake venom subfamily. Monomer. As to expression, expressed by the venom gland.

Its subcellular location is the secreted. Snake venom serine protease that may act in the hemostasis system of the prey. This chain is Snake venom serine protease BmSP, found in Bungarus multicinctus (Many-banded krait).